Here is a 162-residue protein sequence, read N- to C-terminus: Nucleotide-binding protein SAV_4896 (162 aa).

The protein belongs to the YajQ family.

In terms of biological role, nucleotide-binding protein. The polypeptide is Nucleotide-binding protein SAV_4896 (Streptomyces avermitilis (strain ATCC 31267 / DSM 46492 / JCM 5070 / NBRC 14893 / NCIMB 12804 / NRRL 8165 / MA-4680)).